Here is a 174-residue protein sequence, read N- to C-terminus: MIDAEGFRANVGIVICNSLGQVFWARRYGQHSWQFPQGGIDEGETAEQTMYRELYEEVGLKPEHVKILAVTKNWLRYKLPKRLIRQGSAPVCIGQKQKWFLLQLTCKEQDVDLLQSGHPEFDDWRWVSFWYPVRNVVSFKREVYRRAMKEFAPTAMALSSKPAQGQRSKRRRKN.

Positions 6-149 constitute a Nudix hydrolase domain; sequence GFRANVGIVI…KREVYRRAMK (144 aa). The short motif at 38-59 is the Nudix box element; that stretch reads GGIDEGETAEQTMYRELYEEVG.

Belongs to the Nudix hydrolase family. RppH subfamily. A divalent metal cation is required as a cofactor.

Functionally, accelerates the degradation of transcripts by removing pyrophosphate from the 5'-end of triphosphorylated RNA, leading to a more labile monophosphorylated state that can stimulate subsequent ribonuclease cleavage. The sequence is that of RNA pyrophosphohydrolase from Pseudoalteromonas atlantica (strain T6c / ATCC BAA-1087).